A 687-amino-acid polypeptide reads, in one-letter code: Protein 4.2 (687 aa).

Residue Gly2 is the site of N-myristoyl glycine attachment. The tract at residues 31-39 (LFVRRGQPF) is band 3 binding. Ser247 bears the Phosphoserine mark.

It belongs to the transglutaminase superfamily. Transglutaminase family. In terms of assembly, component of the ankyrin-1 complex in the erythrocyte, composed of ANK1, RHCE, RHAG, SLC4A1, EPB42, GYPA, GYPB and AQP1. Interacts with SLC4A1 (via the cytoplasmic domain); this interaction is mediated by the SLC4A1 Band 3-I dimer. Interacts with ANK1 (via ANK 1-13 repeats). Interacts with AQP1 (via the C-terminal).

The protein resides in the cell membrane. It is found in the cytoplasm. The protein localises to the cytoskeleton. Its function is as follows. Component of the ankyrin-1 complex, a multiprotein complex involved in the stability and shape of the erythrocyte membrane. This is Protein 4.2 from Bos taurus (Bovine).